The following is a 549-amino-acid chain: Glucose-6-phosphate isomerase (549 aa).

The Proton donor role is filled by E355. Active-site residues include H386 and K514.

It belongs to the GPI family.

The protein localises to the cytoplasm. It catalyses the reaction alpha-D-glucose 6-phosphate = beta-D-fructose 6-phosphate. Its pathway is carbohydrate biosynthesis; gluconeogenesis. It functions in the pathway carbohydrate degradation; glycolysis; D-glyceraldehyde 3-phosphate and glycerone phosphate from D-glucose: step 2/4. Functionally, catalyzes the reversible isomerization of glucose-6-phosphate to fructose-6-phosphate. The protein is Glucose-6-phosphate isomerase of Salmonella paratyphi A (strain AKU_12601).